The sequence spans 117 residues: Non-specific lipid-transfer protein 1 (117 aa).

The signal sequence occupies residues 1–26 (MARAQVLLMAAALVLMLTAAPRAAVA). 4 disulfides stabilise this stretch: cysteine 29–cysteine 76, cysteine 39–cysteine 53, cysteine 54–cysteine 99, and cysteine 74–cysteine 113. The Cis-14-hydroxy-10,13-dioxo-7-heptadecenoic acid aspartate ester moiety is linked to residue aspartate 33.

It belongs to the plant LTP family. Aleurone layer of developing and germinating seeds.

In terms of biological role, plant non-specific lipid-transfer proteins transfer phospholipids as well as galactolipids across membranes. May play a role in wax or cutin deposition in the cell walls of expanding epidermal cells and certain secretory tissues. The chain is Non-specific lipid-transfer protein 1 (LTP1) from Hordeum vulgare (Barley).